The following is a 390-amino-acid chain: Branched-chain-amino-acid aminotransferase (390 aa).

N6-(pyridoxal phosphate)lysine is present on Lys-225.

This sequence belongs to the class-IV pyridoxal-phosphate-dependent aminotransferase family. Homodimer. Pyridoxal 5'-phosphate is required as a cofactor.

It carries out the reaction L-leucine + 2-oxoglutarate = 4-methyl-2-oxopentanoate + L-glutamate. It catalyses the reaction L-isoleucine + 2-oxoglutarate = (S)-3-methyl-2-oxopentanoate + L-glutamate. The catalysed reaction is L-valine + 2-oxoglutarate = 3-methyl-2-oxobutanoate + L-glutamate. In terms of biological role, catalyzes the first reaction in the catabolism of the essential branched chain amino acids leucine, isoleucine, and valine. In Monosiga brevicollis (Choanoflagellate), this protein is Branched-chain-amino-acid aminotransferase.